The sequence spans 316 residues: 4-hydroxy-3-methylbut-2-enyl diphosphate reductase (316 aa).

Cys-12 serves as a coordination point for [4Fe-4S] cluster. The (2E)-4-hydroxy-3-methylbut-2-enyl diphosphate site is built by His-41 and His-74. Dimethylallyl diphosphate-binding residues include His-41 and His-74. His-41 and His-74 together coordinate isopentenyl diphosphate. Residue Cys-96 participates in [4Fe-4S] cluster binding. Residue His-124 participates in (2E)-4-hydroxy-3-methylbut-2-enyl diphosphate binding. His-124 is a binding site for dimethylallyl diphosphate. An isopentenyl diphosphate-binding site is contributed by His-124. Glu-126 serves as the catalytic Proton donor. Thr-169 lines the (2E)-4-hydroxy-3-methylbut-2-enyl diphosphate pocket. Cys-199 contacts [4Fe-4S] cluster. Residues Ser-227, Ser-228, Asn-229, and Ser-271 each coordinate (2E)-4-hydroxy-3-methylbut-2-enyl diphosphate. The dimethylallyl diphosphate site is built by Ser-227, Ser-228, Asn-229, and Ser-271. The isopentenyl diphosphate site is built by Ser-227, Ser-228, Asn-229, and Ser-271.

This sequence belongs to the IspH family. [4Fe-4S] cluster is required as a cofactor.

It carries out the reaction isopentenyl diphosphate + 2 oxidized [2Fe-2S]-[ferredoxin] + H2O = (2E)-4-hydroxy-3-methylbut-2-enyl diphosphate + 2 reduced [2Fe-2S]-[ferredoxin] + 2 H(+). It catalyses the reaction dimethylallyl diphosphate + 2 oxidized [2Fe-2S]-[ferredoxin] + H2O = (2E)-4-hydroxy-3-methylbut-2-enyl diphosphate + 2 reduced [2Fe-2S]-[ferredoxin] + 2 H(+). The protein operates within isoprenoid biosynthesis; dimethylallyl diphosphate biosynthesis; dimethylallyl diphosphate from (2E)-4-hydroxy-3-methylbutenyl diphosphate: step 1/1. It functions in the pathway isoprenoid biosynthesis; isopentenyl diphosphate biosynthesis via DXP pathway; isopentenyl diphosphate from 1-deoxy-D-xylulose 5-phosphate: step 6/6. Functionally, catalyzes the conversion of 1-hydroxy-2-methyl-2-(E)-butenyl 4-diphosphate (HMBPP) into a mixture of isopentenyl diphosphate (IPP) and dimethylallyl diphosphate (DMAPP). Acts in the terminal step of the DOXP/MEP pathway for isoprenoid precursor biosynthesis. The polypeptide is 4-hydroxy-3-methylbut-2-enyl diphosphate reductase (Vibrio vulnificus (strain CMCP6)).